A 565-amino-acid chain; its full sequence is Acyl-CoA ligase easD (565 aa).

ATP is bound by residues 213-221 (TSGTSGKQK), 354-359 (HAYGLT), Asp438, Arg457, and Lys555. The segment at 284 to 354 (DMQLMLKTIE…KLRPTWKINH (71 aa)) is SBD1. Residues 355-417 (AYGLTETGVV…FNSPSCFLGY (63 aa)) are SBD2.

The protein belongs to the ATP-dependent AMP-binding enzyme family.

Its pathway is antibiotic biosynthesis. Its function is as follows. Acyl-CoA ligase; part of the gene cluster that mediates the biosynthesis of emericellamides, secondary metabolites acting as antibiotics. The biosynthesis of emericellamides initiates from the highly reducing polyketide synthase easB which catalyzes the formation of the linear polyketide chain. EasB produces several polyketides that can be further processed by the downstream enzymes. The polyketides are released from easB as linear polyketide carboxylic acids, which are converted to CoA thioesters by the acyl-CoA ligase easD. The substrates are then loaded onto the acyltransferase easC, which shuttles them to the first thiolation (T) domain of the nonribosomal peptide synthetase easA. EasA then performs condensation of the polyketides with one glycine, two alanine, one valine and one leucine residues. A last step of cyclization leads to the production of emericellamides. This is Acyl-CoA ligase easD from Emericella nidulans (strain FGSC A4 / ATCC 38163 / CBS 112.46 / NRRL 194 / M139) (Aspergillus nidulans).